The primary structure comprises 440 residues: Thymidine phosphorylase (440 aa).

The protein belongs to the thymidine/pyrimidine-nucleoside phosphorylase family. As to quaternary structure, homodimer.

It carries out the reaction thymidine + phosphate = 2-deoxy-alpha-D-ribose 1-phosphate + thymine. The protein operates within pyrimidine metabolism; dTMP biosynthesis via salvage pathway; dTMP from thymine: step 1/2. The enzymes which catalyze the reversible phosphorolysis of pyrimidine nucleosides are involved in the degradation of these compounds and in their utilization as carbon and energy sources, or in the rescue of pyrimidine bases for nucleotide synthesis. The protein is Thymidine phosphorylase of Burkholderia pseudomallei (strain 1106a).